The chain runs to 155 residues: Transcriptional repressor NrdR (155 aa).

A disordered region spans residues 1–22; the sequence is MRCPFCGHDETQVKDSRPSEDG. Residues 3–34 fold into a zinc finger; sequence CPFCGHDETQVKDSRPSEDGAAIRRRRLCPQC. The segment covering 7-22 has biased composition (basic and acidic residues); the sequence is GHDETQVKDSRPSEDG. One can recognise an ATP-cone domain in the interval 49 to 139; it reads ITILKRSGRR…VYRDFRETQD (91 aa).

Belongs to the NrdR family. The cofactor is Zn(2+).

Negatively regulates transcription of bacterial ribonucleotide reductase nrd genes and operons by binding to NrdR-boxes. The sequence is that of Transcriptional repressor NrdR from Phenylobacterium zucineum (strain HLK1).